The following is a 485-amino-acid chain: 28S rRNA (uridine-N(3))-methyltransferase (485 aa).

3 residues coordinate S-adenosyl-L-methionine: arginine 296, glycine 318, and asparagine 347.

The protein belongs to the class IV-like SAM-binding methyltransferase superfamily.

It localises to the nucleus. The catalysed reaction is uridine in 28S rRNA + S-adenosyl-L-methionine = N(3)-methyluridine in 28S rRNA + S-adenosyl-L-homocysteine + H(+). In terms of biological role, S-adenosyl-L-methionine-dependent methyltransferase that specifically methylates the uridine in position 3485 of 28S rRNA. This chain is 28S rRNA (uridine-N(3))-methyltransferase, found in Drosophila melanogaster (Fruit fly).